The primary structure comprises 430 residues: Alpha-humulene synthase asR6 (430 aa).

Belongs to the terpene synthase family. Alpha-humulene synthase eupE subfamily. It depends on Mg(2+) as a cofactor.

The catalysed reaction is (2E,6E)-farnesyl diphosphate = alpha-humulene + diphosphate. It functions in the pathway secondary metabolite biosynthesis; terpenoid biosynthesis. Its function is as follows. Alpha-humulene synthase; part of the gene cluster that mediates the biosynthesis of xenovulene A, an unusual meroterpenoid that has potent inhibitory effects on the human gamma-aminobutyrate A (GABAA) benzodiazepine receptor. The first step of xenovulene A biosynthesis is the biosynthesis of 3-methylorcinaldehyde performed by the non-reducing polyketide synthase aspks1. The salicylate hydroxylase asL1 then catalyzes the oxidative dearomatization of 3-methylorcinaldehyde to yield a dearomatized hydroxycyclohexadione. The 2-oxoglutarate-dependent dioxygenase asL3 further catalyzes the oxidative ring expansion to provide the first tropolone metabolite. The cytochrome P450 monooxygenase asR2 allows the synthesis of tropolone hemiacetal. In parallel, a previously unrecognised class of terpene cyclase, asR6, produces alpha-humulene from farnesylpyrophosphate (FPP). The putative Diels-Alderase asR5 probably catalyzes the formation of the tropolone-humulene skeleton by linking humulene and the polyketide moiety. Oxidative-ring contractions catalyzed by asL4 and asL6 then processively remove carbon atoms from the polyketide to yield xenovulene A. In Sarocladium schorii (Acremonium strictum (strain IMI 501407)), this protein is Alpha-humulene synthase asR6.